The sequence spans 476 residues: Serine/threonine-protein kinase Chk1 (476 aa).

Residues 1–265 (MAVPFVEDWD…IPDIKKDRWY (265 aa)) are interaction with CLSPN. One can recognise a Protein kinase domain in the interval 9 to 265 (WDLVQTLGEG…IPDIKKDRWY (257 aa)). Residues 15–23 (LGEGAYGEV) and K38 each bind ATP. D130 serves as the catalytic Proton acceptor. K132 is covalently cross-linked (Glycyl lysine isopeptide (Lys-Gly) (interchain with G-Cter in ubiquitin)). Residues 267-331 (KPLNRGAKRP…RTGLSLWDTG (65 aa)) form a disordered region. S280 carries the phosphoserine; by PKB/AKT1 modification. Residues 280–291 (SGGMSESSSGFS) are compositionally biased toward low complexity. S286, S296, and S301 each carry phosphoserine. Over residues 298–320 (LDFSPVNNGSSEETVKFSSSQPE) the composition is skewed to polar residues. Residue S317 is modified to Phosphoserine; by ATM and ATR. Position 345 is a phosphoserine; by ATR (S345). The autoinhibitory region stretch occupies residues 391-476 (QCLKETFEKL…SSQKVWFPVT (86 aa)). Residue K436 forms a Glycyl lysine isopeptide (Lys-Gly) (interchain with G-Cter in ubiquitin) linkage. 3 positions are modified to phosphoserine: S463, S467, and S468.

It belongs to the protein kinase superfamily. CAMK Ser/Thr protein kinase family. NIM1 subfamily. In terms of assembly, interacts (phosphorylated by ATR) with RAD51. Interacts with and phosphorylates CLSPN, an adapter protein that regulates the ATR-dependent phosphorylation of CHEK1. Interacts with BRCA1. Interacts with and phosphorylates CDC25A, CDC25B and CDC25C. Interacts with FBXO6, which regulates CHEK1. Interacts with PPM1D, which regulates CHEK1 through dephosphorylation. Interacts with TIMELESS; DNA damage-dependent. Interacts with FEM1B; activates CHEK1 in response to stress. Interacts with TLK1. Interacts with XPO1 and YWHAZ. Interacts with CDK5RAP3; antagonizes CHEK1. Phosphorylated by ATR in a RAD17-dependent manner in response to ultraviolet irradiation and inhibition of DNA replication. Phosphorylated by ATM in response to ionizing irradiation. ATM and ATR can both phosphorylate Ser-317 and Ser-345 and this results in enhanced kinase activity. Phosphorylation at Ser-345 induces a change in the conformation of the protein, activates the kinase activity and is a prerequisite for interaction with FBXO6 and subsequent ubiquitination at Lys-436. Phosphorylation at Ser-345 also increases binding to 14-3-3 proteins and promotes nuclear retention. Conversely, dephosphorylation at Ser-345 by PPM1D may contribute to exit from checkpoint mediated cell cycle arrest. Phosphorylation at Ser-280 by AKT1/PKB, may promote mono and/or diubiquitination. Also phosphorylated at undefined residues during mitotic arrest, resulting in decreased activity. In terms of processing, ubiquitinated. Mono or diubiquitination promotes nuclear exclusion. The activated form (phosphorylated on Ser-345) is polyubiquitinated at Lys-436 by some SCF-type E3 ubiquitin ligase complex containing FBXO6 promoting its degradation. Ubiquitination and degradation are required to terminate the checkpoint and ensure that activated CHEK1 does not accumulate as cells progress through S phase, when replication forks encounter transient impediments during normal DNA replication. 'Lys-63'-mediated ubiquitination by TRAF4 at Lys-132 activates cell cycle arrest and activation of DNA repair. Post-translationally, proteolytically cleaved at the C-terminus by SPRTN during normal DNA replication, thereby promoting CHEK1 removal from chromatin and activating the protein kinase activity. As to expression, found in all adult tissues tested. Elevated expression in testis, lung and spleen. 15.5 day old embryos show ubiquitous expression with strong expression in brain, liver, kidney, pancreas, intestine, thymus and lung.

The protein resides in the nucleus. The protein localises to the chromosome. It is found in the cytoplasm. Its subcellular location is the cytoskeleton. It localises to the microtubule organizing center. The protein resides in the centrosome. The enzyme catalyses L-seryl-[protein] + ATP = O-phospho-L-seryl-[protein] + ADP + H(+). It carries out the reaction L-threonyl-[protein] + ATP = O-phospho-L-threonyl-[protein] + ADP + H(+). With respect to regulation, activated through phosphorylation predominantly by ATR but also by ATM in response to DNA damage or inhibition of DNA replication. Activation is modulated by several mediators including CLSPN, BRCA1 and FEM1B. Proteolytic cleavage at the C-terminus by SPRTN during normal DNA replication activates the protein kinase activity. In terms of biological role, serine/threonine-protein kinase which is required for checkpoint-mediated cell cycle arrest and activation of DNA repair in response to the presence of DNA damage or unreplicated DNA. May also negatively regulate cell cycle progression during unperturbed cell cycles. This regulation is achieved by a number of mechanisms that together help to preserve the integrity of the genome. Recognizes the substrate consensus sequence [R-X-X-S/T]. Binds to and phosphorylates CDC25A, CDC25B and CDC25C. Phosphorylation of CDC25A at 'Ser-178' and 'Thr-507' and phosphorylation of CDC25C at 'Ser-216' creates binding sites for 14-3-3 proteins which inhibit CDC25A and CDC25C. Phosphorylation of CDC25A at 'Ser-76', 'Ser-124', 'Ser-178', 'Ser-279' and 'Ser-293' promotes proteolysis of CDC25A. Phosphorylation of CDC25A at 'Ser-76' primes the protein for subsequent phosphorylation at 'Ser-79', 'Ser-82' and 'Ser-88' by NEK11, which is required for polyubiquitination and degradation of CDCD25A. Inhibition of CDC25 leads to increased inhibitory tyrosine phosphorylation of CDK-cyclin complexes and blocks cell cycle progression. Also phosphorylates NEK6. Binds to and phosphorylates RAD51 at 'Thr-309', which promotes the release of RAD51 from BRCA2 and enhances the association of RAD51 with chromatin, thereby promoting DNA repair by homologous recombination. Phosphorylates multiple sites within the C-terminus of TP53, which promotes activation of TP53 by acetylation and promotes cell cycle arrest and suppression of cellular proliferation. Also promotes repair of DNA cross-links through phosphorylation of FANCE. Binds to and phosphorylates TLK1 at 'Ser-743', which prevents the TLK1-dependent phosphorylation of the chromatin assembly factor ASF1A. This may enhance chromatin assembly both in the presence or absence of DNA damage. May also play a role in replication fork maintenance through regulation of PCNA. May regulate the transcription of genes that regulate cell-cycle progression through the phosphorylation of histones. Phosphorylates histone H3.1 (to form H3T11ph), which leads to epigenetic inhibition of a subset of genes. May also phosphorylate RB1 to promote its interaction with the E2F family of transcription factors and subsequent cell cycle arrest. Phosphorylates SPRTN, promoting SPRTN recruitment to chromatin. Reduces replication stress and activates the G2/M checkpoint, by phosphorylating and inactivating PABIR1/FAM122A and promoting the serine/threonine-protein phosphatase 2A-mediated dephosphorylation and stabilization of WEE1 levels and activity. The sequence is that of Serine/threonine-protein kinase Chk1 (Chek1) from Mus musculus (Mouse).